The following is a 194-amino-acid chain: Fe/S biogenesis protein NfuA (194 aa).

The [4Fe-4S] cluster site is built by Cys-151 and Cys-154.

This sequence belongs to the NfuA family. Homodimer. Requires [4Fe-4S] cluster as cofactor.

Functionally, involved in iron-sulfur cluster biogenesis. Binds a 4Fe-4S cluster, can transfer this cluster to apoproteins, and thereby intervenes in the maturation of Fe/S proteins. Could also act as a scaffold/chaperone for damaged Fe/S proteins. This Vibrio vulnificus (strain CMCP6) protein is Fe/S biogenesis protein NfuA.